The following is an 85-amino-acid chain: Large ribosomal subunit protein eL43 (85 aa).

4 residues coordinate Zn(2+): Cys-32, Cys-35, Cys-50, and Cys-53. A C4-type zinc finger spans residues 32–53 (CTFCGKTKMKRRAVGIWHCGSC).

This sequence belongs to the eukaryotic ribosomal protein eL43 family. As to quaternary structure, component of the large ribosomal subunit.

The protein resides in the cytoplasm. Functionally, component of the large ribosomal subunit. The ribosome is a large ribonucleoprotein complex responsible for the synthesis of proteins in the cell. This Myxine glutinosa (Atlantic hagfish) protein is Large ribosomal subunit protein eL43 (rpl37a).